The chain runs to 242 residues: Venom nerve growth factor 3 (242 aa).

The first 18 residues, 1-18 (MSMLCYTLIIAFLIGIWA), serve as a signal peptide directing secretion. A propeptide spanning residues 19 to 125 (APKSEDNVPL…ALNRNIRSKR (107 aa)) is cleaved from the precursor. Residues 48–66 (LKTSRNTDQRHPAPKKAED) show a composition bias toward basic and acidic residues. The interval 48–69 (LKTSRNTDQRHPAPKKAEDQEL) is disordered. 3 cysteine pairs are disulfide-bonded: cysteine 139/cysteine 203, cysteine 181/cysteine 231, and cysteine 191/cysteine 233. N-linked (GlcNAc...) asparagine glycosylation is present at asparagine 147.

This sequence belongs to the NGF-beta family. Homodimer; non-covalently linked. In terms of tissue distribution, expressed by the venom gland.

It localises to the secreted. Its function is as follows. Nerve growth factor is important for the development and maintenance of the sympathetic and sensory nervous systems. It stimulates division and differentiation of sympathetic and embryonic sensory neurons as well as basal forebrain cholinergic neurons in the brain. Its relevance in the snake venom is not clear. However, it has been shown to inhibit metalloproteinase-dependent proteolysis of platelet glycoprotein Ib alpha, suggesting a metalloproteinase inhibition to prevent metalloprotease autodigestion and/or protection against prey proteases. Binds a lipid between the two protein chains in the homodimer. The lipid-bound form promotes histamine relase from mouse mast cells, contrary to the lipid-free form. The chain is Venom nerve growth factor 3 from Demansia vestigiata (Lesser black whip snake).